Consider the following 120-residue polypeptide: Chaperonin GroEL (120 aa).

Residue 23–27 (DGTTT) participates in ATP binding.

Belongs to the chaperonin (HSP60) family. In terms of assembly, forms a cylinder of 14 subunits composed of two heptameric rings stacked back-to-back. Interacts with the co-chaperonin GroES.

The protein localises to the cytoplasm. The catalysed reaction is ATP + H2O + a folded polypeptide = ADP + phosphate + an unfolded polypeptide.. Together with its co-chaperonin GroES, plays an essential role in assisting protein folding. The GroEL-GroES system forms a nano-cage that allows encapsulation of the non-native substrate proteins and provides a physical environment optimized to promote and accelerate protein folding. The protein is Chaperonin GroEL of Mycolicibacterium pulveris (Mycobacterium pulveris).